Reading from the N-terminus, the 215-residue chain is Large ribosomal subunit protein uL1 (215 aa).

The protein belongs to the universal ribosomal protein uL1 family. Part of the 50S ribosomal subunit.

Functionally, binds directly to 23S rRNA. Probably involved in E site tRNA release. In terms of biological role, protein L1 is also a translational repressor protein, it controls the translation of its operon by binding to its mRNA. The polypeptide is Large ribosomal subunit protein uL1 (Archaeoglobus fulgidus (strain ATCC 49558 / DSM 4304 / JCM 9628 / NBRC 100126 / VC-16)).